A 1151-amino-acid polypeptide reads, in one-letter code: Cation channel sperm-associated protein subunit gamma 1 (1151 aa).

Residues 1–38 (MVSRPAMSPVSPVWPRKPNLWAFWVLRLVLLLSLKSWA) form the signal peptide. Topologically, residues 39-1063 (EDTLQHCTWL…GLPLSSKRSS (1025 aa)) are extracellular. N-linked (GlcNAc...) asparagine glycosylation is present at Asn-356. The helical transmembrane segment at 1064–1084 (FIVMVSTSFFIALVVFYILFC) threads the bilayer. Residues 1085-1151 (LVWPHIVKAW…NVQAKRAKVA (67 aa)) are Cytoplasmic-facing. Over residues 1113–1123 (SSSSGGFTLHS) the composition is skewed to low complexity. A disordered region spans residues 1113–1151 (SSSSGGFTLHSHSSEGSFEGPSRPGTKEDNVQAKRAKVA).

It belongs to the CATSPERG family.

It localises to the membrane. In Mus musculus (Mouse), this protein is Cation channel sperm-associated protein subunit gamma 1 (Catsperg1).